The following is a 332-amino-acid chain: Aquaporin-7-2 (332 aa).

The segment covering 1 to 40 has biased composition (polar residues); the sequence is MSGQHQITEQPSGNPLSRTSTLIQEKPLTPTSSHAGTQKQ. Residues 1–46 form a disordered region; that stretch reads MSGQHQITEQPSGNPLSRTSTLIQEKPLTPTSSHAGTQKQPEAPRQ. Residues 1 to 66 are Cytoplasmic-facing; the sequence is MSGQHQITEQ…RHAIRKPMAE (66 aa). The helical transmembrane segment at 67–87 threads the bilayer; that stretch reads FFGVALLIIFGAGSACQVVLS. Residues 88-100 are Extracellular-facing; that stretch reads TNPDVASSARGSF. A helical transmembrane segment spans residues 101–121; it reads LSINFGWAIGIAMGVWVSGGI. Residues 122 to 144 are Cytoplasmic-facing; it reads SGGHINPAITIAMATYRGFPWCK. The short motif at 127–129 is the NPA 1 element; it reads NPA. A helical membrane pass occupies residues 145–165; it reads VPSYILAQVLGGVVGAALVYA. The Extracellular segment spans residues 166-199; the sequence is NYIHAIDVFEGGHHIRTEATASLFATYALPYMTQ. Residues 200–220 form a helical membrane-spanning segment; that stretch reads ASCFFSEFLATAVLSMMVFAL. The Cytoplasmic segment spans residues 221–230; that stretch reads TDKRNHSPTN. A helical transmembrane segment spans residues 231-251; that stretch reads GLLPFALFILFVGLGASLGME. The Extracellular segment spans residues 252 to 283; it reads TAYALNPARDFGPRLFLAMAGYGKALFNYRSQ. The NPA 2 motif lies at 257 to 259; sequence NPA. Residues 284–304 form a helical membrane-spanning segment; sequence YWLWAPIIAPVLGAQAGGLLY. Residues 305-332 lie on the Cytoplasmic side of the membrane; the sequence is DTFLNDGDNSPIKWRCASSQEQQLAEVV.

The protein belongs to the MIP/aquaporin (TC 1.A.8) family.

The protein resides in the membrane. The catalysed reaction is H2O(in) = H2O(out). Functionally, water channel required to facilitate the transport of water across membranes. Does not mediate the transport carbon dioxide across the membrane. This is Aquaporin-7-2 from Laccaria bicolor (Bicoloured deceiver).